A 281-amino-acid chain; its full sequence is Phosphatidylglycerol--prolipoprotein diacylglyceryl transferase (281 aa).

3 consecutive transmembrane segments (helical) span residues 11 to 31 (IIFTIGPVSARWYGFMYVISF), 57 to 77 (LLYSIFLGSCIGGRIGYIIFY), and 89 to 109 (VFYIWEGGMSFHGGLIGAIIV). Arginine 140 contacts a 1,2-diacyl-sn-glycero-3-phospho-(1'-sn-glycerol). The next 3 helical transmembrane spans lie at 194-214 (PTQLYEFFLEGILLFFIIYFF), 222-242 (GSISGLFLIFYGLFRIFIEFF), and 255-275 (IITMGQILSLPMIIAGLIIMY).

This sequence belongs to the Lgt family.

The protein resides in the cell inner membrane. It carries out the reaction L-cysteinyl-[prolipoprotein] + a 1,2-diacyl-sn-glycero-3-phospho-(1'-sn-glycerol) = an S-1,2-diacyl-sn-glyceryl-L-cysteinyl-[prolipoprotein] + sn-glycerol 1-phosphate + H(+). The protein operates within protein modification; lipoprotein biosynthesis (diacylglyceryl transfer). Catalyzes the transfer of the diacylglyceryl group from phosphatidylglycerol to the sulfhydryl group of the N-terminal cysteine of a prolipoprotein, the first step in the formation of mature lipoproteins. In Buchnera aphidicola subsp. Acyrthosiphon pisum (strain APS) (Acyrthosiphon pisum symbiotic bacterium), this protein is Phosphatidylglycerol--prolipoprotein diacylglyceryl transferase.